The primary structure comprises 333 residues: Protein VTE6, chloroplastic (333 aa).

A chloroplast-targeting transit peptide spans Met-1–Ala-65. A run of 6 helical transmembrane segments spans residues Leu-94–Ala-114, Ala-126–Thr-146, Val-171–Gly-191, Thr-248–Ile-268, Ala-274–Phe-294, and Val-307–Ile-327.

The protein belongs to the TMEM19 family.

Its subcellular location is the plastid. The protein resides in the chloroplast membrane. It carries out the reaction phytyl phosphate + a ribonucleoside 5'-triphosphate = phytyl diphosphate + a ribonucleoside 5'-diphosphate. The catalysed reaction is phytyl phosphate + CTP = phytyl diphosphate + CDP. The protein operates within cofactor biosynthesis; tocopherol biosynthesis. Functionally, phytyl-phosphate kinase catalyzing the conversion of phytyl-monophosphate to phytyl-diphosphate. Involved in the activation and reutilization of phytol from chlorophyll degradation in plant metabolism, including tocopherol (vitamin E) biosynthesis. Involved in the biosynthesis of phylloquinone (vitamin K), which is required for the photosystem I (PSI) complex stability. In Arabidopsis thaliana (Mouse-ear cress), this protein is Protein VTE6, chloroplastic.